The sequence spans 347 residues: Beta-hexosaminidase (347 aa).

Substrate contacts are provided by residues aspartate 64, arginine 72, arginine 138, and 168 to 169; that span reads KH. Histidine 181 serves as the catalytic Proton donor/acceptor. Aspartate 251 functions as the Nucleophile in the catalytic mechanism.

It belongs to the glycosyl hydrolase 3 family. NagZ subfamily.

Its subcellular location is the cytoplasm. The enzyme catalyses Hydrolysis of terminal non-reducing N-acetyl-D-hexosamine residues in N-acetyl-beta-D-hexosaminides.. It functions in the pathway cell wall biogenesis; peptidoglycan recycling. Functionally, plays a role in peptidoglycan recycling by cleaving the terminal beta-1,4-linked N-acetylglucosamine (GlcNAc) from peptide-linked peptidoglycan fragments, giving rise to free GlcNAc, anhydro-N-acetylmuramic acid and anhydro-N-acetylmuramic acid-linked peptides. The chain is Beta-hexosaminidase from Thioalkalivibrio sulfidiphilus (strain HL-EbGR7).